We begin with the raw amino-acid sequence, 511 residues long: 2-isopropylmalate synthase (511 aa).

A Pyruvate carboxyltransferase domain is found at 5–267 (LIIFDTTLRD…DTDINATHIL (263 aa)). Positions 14, 202, 204, and 238 each coordinate Mn(2+). The segment at 392–511 (KLVSLKVCTE…ATNKAQHPQI (120 aa)) is regulatory domain.

The protein belongs to the alpha-IPM synthase/homocitrate synthase family. LeuA type 1 subfamily. Homodimer. Mn(2+) serves as cofactor.

The protein resides in the cytoplasm. It carries out the reaction 3-methyl-2-oxobutanoate + acetyl-CoA + H2O = (2S)-2-isopropylmalate + CoA + H(+). Its pathway is amino-acid biosynthesis; L-leucine biosynthesis; L-leucine from 3-methyl-2-oxobutanoate: step 1/4. In terms of biological role, catalyzes the condensation of the acetyl group of acetyl-CoA with 3-methyl-2-oxobutanoate (2-ketoisovalerate) to form 3-carboxy-3-hydroxy-4-methylpentanoate (2-isopropylmalate). The protein is 2-isopropylmalate synthase of Ruthia magnifica subsp. Calyptogena magnifica.